The primary structure comprises 632 residues: tRNA uridine 5-carboxymethylaminomethyl modification enzyme MnmG (632 aa).

14–19 contributes to the FAD binding site; it reads GAGHAG. Residue 273 to 287 participates in NAD(+) binding; that stretch reads GPRYCPSFEDKIMRF.

The protein belongs to the MnmG family. As to quaternary structure, homodimer. Heterotetramer of two MnmE and two MnmG subunits. FAD serves as cofactor.

Its subcellular location is the cytoplasm. Its function is as follows. NAD-binding protein involved in the addition of a carboxymethylaminomethyl (cmnm) group at the wobble position (U34) of certain tRNAs, forming tRNA-cmnm(5)s(2)U34. This Clostridium novyi (strain NT) protein is tRNA uridine 5-carboxymethylaminomethyl modification enzyme MnmG.